We begin with the raw amino-acid sequence, 205 residues long: uncharacterized protein (205 aa).

Positions 10–75 (QDLLSAVDQQ…AANLMTVMTD (66 aa)) form a coiled coil. Residues 108–141 (MPLPSSNTNNDQTSPPASGKTSETPKKNPTNAMF) form a disordered region. The span at 111–141 (PSSNTNNDQTSPPASGKTSETPKKNPTNAMF) shows a compositional bias: polar residues.

It belongs to the asfivirus K205R family.

It is found in the host cytoplasm. Induces host endoplasmic reticulum stress and consequently activates autophagy and NF-kappa-B signaling pathway. In turn, may induce autophagy-mediated STING1 degradation and innate immune evasion. This is an uncharacterized protein from Ornithodoros (relapsing fever ticks).